A 182-amino-acid chain; its full sequence is Probable nicotinate-nucleotide adenylyltransferase (182 aa).

Belongs to the NadD family.

It carries out the reaction nicotinate beta-D-ribonucleotide + ATP + H(+) = deamido-NAD(+) + diphosphate. The protein operates within cofactor biosynthesis; NAD(+) biosynthesis; deamido-NAD(+) from nicotinate D-ribonucleotide: step 1/1. In terms of biological role, catalyzes the reversible adenylation of nicotinate mononucleotide (NaMN) to nicotinic acid adenine dinucleotide (NaAD). The protein is Probable nicotinate-nucleotide adenylyltransferase of Sulfurimonas denitrificans (strain ATCC 33889 / DSM 1251) (Thiomicrospira denitrificans (strain ATCC 33889 / DSM 1251)).